The primary structure comprises 88 residues: Long neurotoxin 31 (88 aa).

The N-terminal stretch at 1 to 21 is a signal peptide; it reads MKTLLLTLVVVTIVCLDLGNS. 5 cysteine pairs are disulfide-bonded: Cys-24–Cys-42, Cys-35–Cys-63, Cys-48–Cys-52, Cys-67–Cys-78, and Cys-79–Cys-84.

It belongs to the three-finger toxin family. Long-chain subfamily. Type II alpha-neurotoxin sub-subfamily. Expressed by the venom gland.

It localises to the secreted. In terms of biological role, binds with high affinity to muscular (alpha-1/CHRNA1) and neuronal (alpha-7/CHRNA7) nicotinic acetylcholine receptor (nAChR) and inhibits acetylcholine from binding to the receptor, thereby impairing neuromuscular and neuronal transmission. This is Long neurotoxin 31 from Drysdalia coronoides (White-lipped snake).